The following is a 385-amino-acid chain: Mannitol-1-phosphate 5-dehydrogenase (385 aa).

An NAD(+)-binding site is contributed by 3 to 14 (ALQFGAGNIGRG).

This sequence belongs to the mannitol dehydrogenase family.

The enzyme catalyses D-mannitol 1-phosphate + NAD(+) = beta-D-fructose 6-phosphate + NADH + H(+). In Buchnera aphidicola subsp. Acyrthosiphon pisum (strain 5A), this protein is Mannitol-1-phosphate 5-dehydrogenase.